We begin with the raw amino-acid sequence, 118 residues long: Basic phospholipase A2 homolog 1 (118 aa).

7 disulfides stabilise this stretch: Cys-11–Cys-71, Cys-27–Cys-117, Cys-29–Cys-45, Cys-44–Cys-98, Cys-51–Cys-91, Cys-60–Cys-84, and Cys-78–Cys-89. The tract at residues 106 to 118 (NKNFNIDTKKRCK) is important for membrane-damaging activities in eukaryotes and bacteria; heparin-binding.

The protein belongs to the phospholipase A2 family. Group I subfamily. D49 sub-subfamily. In terms of tissue distribution, expressed by the venom gland.

It is found in the secreted. This chain is Basic phospholipase A2 homolog 1, found in Laticauda colubrina (Yellow-lipped sea krait).